We begin with the raw amino-acid sequence, 227 residues long: Guanylate kinase (227 aa).

Residues 21-199 enclose the Guanylate kinase-like domain; it reads GNLFMVVAPS…ALAELECIVA (179 aa). Residue 28 to 35 participates in ATP binding; the sequence is APSGAGKS.

Belongs to the guanylate kinase family.

The protein resides in the cytoplasm. The enzyme catalyses GMP + ATP = GDP + ADP. Functionally, essential for recycling GMP and indirectly, cGMP. In Burkholderia thailandensis (strain ATCC 700388 / DSM 13276 / CCUG 48851 / CIP 106301 / E264), this protein is Guanylate kinase.